The chain runs to 317 residues: sn-1-specific diacylglycerol lipase ABHD11 (317 aa).

The transit peptide at 1 to 20 directs the protein to the mitochondrion; sequence MSNFAMSALCRVFTRGAPCG. Positions 69 to 304 constitute an AB hydrolase-1 domain; the sequence is PLVFLHGLFG…ASHWIHADKP (236 aa). Residues Ser142, Glu238, and His297 each act as charge relay system in the active site.

It belongs to the AB hydrolase superfamily. In terms of processing, phosphorylated.

The protein resides in the mitochondrion. The protein localises to the mitochondrion matrix. It carries out the reaction 1-octadecanoyl-2-(5Z,8Z,11Z,14Z-eicosatetraenoyl)-sn-glycerol + H2O = 2-(5Z,8Z,11Z,14Z-eicosatetraenoyl)-glycerol + octadecanoate + H(+). The enzyme catalyses a 1,2-diacyl-sn-glycerol + H2O = a 2-acylglycerol + a fatty acid + H(+). It catalyses the reaction a 1,3-diacyl-sn-glycerol + H2O = a 1-acyl-sn-glycerol + a fatty acid + H(+). The catalysed reaction is 1-octadecanoyl-2-(9Z-octadecenoyl)-sn-glycerol + H2O = 2-(9Z-octadecenoyl)-glycerol + octadecanoate + H(+). It carries out the reaction 1-octadecanoyl-2-(4Z,7Z,10Z,13Z,16Z,19Z-docosahexaenoyl)-sn-glycerol + H2O = 2-(4Z,7Z,10Z,13Z,16Z,19Z-docosahexaenoyl)-glycerol + octadecanoate + H(+). The enzyme catalyses 1,2-didecanoylglycerol + H2O = decanoylglycerol + decanoate + H(+). Functionally, catalyzes the hydrolysis of diacylglycerol in vitro and may function as a key regulator in lipid metabolism, namely by regulating the intracellular levels of diacylglycerol. 1,2-diacyl-sn-glycerols are the preferred substrate over 1,3-diacyl-sn-glycerols. The enzyme hydrolyzes stearate in preference to palmitate from the sn-1 position of 1,2-diacyl-sn-glycerols. This chain is sn-1-specific diacylglycerol lipase ABHD11, found in Danio rerio (Zebrafish).